The sequence spans 657 residues: Probable intron-encoded endonuclease aI2 (657 aa).

The COX1 exons 1 to 2 encoded stretch occupies residues 1 to 245 (MKQMSYVTRW…TYEHLFWFFG (245 aa)). The next 6 membrane-spanning stretches (helical) occupy residues 19–39 (IGMTYLGFGMLSAMMGTGMSV), 69–89 (LLMMFFFIMPVWMGAFGNFFL), 103–123 (LNNISFWCLPPALVCMVCSVL), 152–172 (AMFAMHLTSMSSLLGAMNFMV), 188–208 (PLFAWAMFLTAMLLLLSLPVL), and 269–289 (MYFIMLLITMYMSTNLLANMV). Residues 246-657 (QWWPTNYVNN…KFENKWNKKF (412 aa)) form a COX1 intron 2 encoded region.

This sequence in the C-terminal section; belongs to the LAGLIDADG endonuclease family. It in the N-terminal section; belongs to the heme-copper respiratory oxidase family. In terms of processing, the mature protein may arise from proteolytic cleavage of an in-frame translation of COX1 exons 1 and 2 plus intron 2, containing the aI2 open reading frame.

Its subcellular location is the mitochondrion. The protein localises to the membrane. In terms of biological role, mitochondrial DNA endonuclease involved in intron homing. This chain is Probable intron-encoded endonuclease aI2 (aI2), found in Debaryomyces hansenii (strain ATCC 36239 / CBS 767 / BCRC 21394 / JCM 1990 / NBRC 0083 / IGC 2968) (Yeast).